We begin with the raw amino-acid sequence, 518 residues long: Xaa-Pro aminopeptidase 3 (518 aa).

A mitochondrion-targeting transit peptide spans 1–48; that stretch reads MNNICKLNKFIISKSSSSLSSTSSKIKTNCLIKNAKMFSSSLNLNRFY. Positions 314, 345, 356, 434, 441, 461, and 485 each coordinate substrate. Positions 345, 356, and 434 each coordinate Mn(2+). Mn(2+) is bound by residues E461 and E485.

It belongs to the peptidase M24B family. As to quaternary structure, homodimer. The cofactor is Mn(2+).

It localises to the mitochondrion. Its subcellular location is the cytoplasm. It carries out the reaction Release of any N-terminal amino acid, including proline, that is linked to proline, even from a dipeptide or tripeptide.. Functionally, catalyzes the removal of a penultimate prolyl residue from the N-termini of peptides, such as Leu-Pro-Ala. Also shows low activity towards peptides with Ala or Ser at the P1 position. The chain is Xaa-Pro aminopeptidase 3 (xpnpep3) from Dictyostelium discoideum (Social amoeba).